The chain runs to 395 residues: DNA primase small subunit PriS (395 aa).

Active-site residues include aspartate 95, aspartate 97, and aspartate 302.

Belongs to the eukaryotic-type primase small subunit family. Heterodimer of a small subunit (PriS) and a large subunit (PriL). Mg(2+) is required as a cofactor. The cofactor is Mn(2+).

Functionally, catalytic subunit of DNA primase, an RNA polymerase that catalyzes the synthesis of short RNA molecules used as primers for DNA polymerase during DNA replication. The small subunit contains the primase catalytic core and has DNA synthesis activity on its own. Binding to the large subunit stabilizes and modulates the activity, increasing the rate of DNA synthesis while decreasing the length of the DNA fragments, and conferring RNA synthesis capability. The DNA polymerase activity may enable DNA primase to also catalyze primer extension after primer synthesis. May also play a role in DNA repair. In Methanothrix thermoacetophila (strain DSM 6194 / JCM 14653 / NBRC 101360 / PT) (Methanosaeta thermophila), this protein is DNA primase small subunit PriS.